A 288-amino-acid chain; its full sequence is Bifunctional protein FolD (288 aa).

NADP(+)-binding positions include 166 to 168 and Ile232; that span reads GAS.

It belongs to the tetrahydrofolate dehydrogenase/cyclohydrolase family. Homodimer.

The catalysed reaction is (6R)-5,10-methylene-5,6,7,8-tetrahydrofolate + NADP(+) = (6R)-5,10-methenyltetrahydrofolate + NADPH. The enzyme catalyses (6R)-5,10-methenyltetrahydrofolate + H2O = (6R)-10-formyltetrahydrofolate + H(+). It participates in one-carbon metabolism; tetrahydrofolate interconversion. Catalyzes the oxidation of 5,10-methylenetetrahydrofolate to 5,10-methenyltetrahydrofolate and then the hydrolysis of 5,10-methenyltetrahydrofolate to 10-formyltetrahydrofolate. This Cronobacter sakazakii (strain ATCC BAA-894) (Enterobacter sakazakii) protein is Bifunctional protein FolD.